Reading from the N-terminus, the 356-residue chain is NF-kappa-B inhibitor beta (356 aa).

A phosphoserine; by RPS6KA1 mark is found at serine 19 and serine 23. ANK repeat units lie at residues 57–86 (DGDT…GTEY), 93–122 (LGQT…GLCV), and 126–155 (RGHT…RRPR). The interval 149-193 (PRPRRPREAPDTYLAQGPDRTPDTNHTPVALYPDSDLEKEEEESE) is disordered. At serine 183 the chain carries Phosphoserine. Acidic residues predominate over residues 183–193 (SDLEKEEEESE). ANK repeat units lie at residues 206–235 (EGHT…DLDK), 240–269 (CGRS…NPAA), and 273–302 (GGRT…PEPE). Residues 298–356 (APEPEGEDEKSGPCSSSSDSDSGDEGDEYDDIVVHSSRSQTRLPPTPASKPLPDDPRPV) are disordered. Phosphoserine; by CK2 occurs at positions 313 and 315. The span at 318-328 (DSGDEGDEYDD) shows a compositional bias: acidic residues.

Belongs to the NF-kappa-B inhibitor family. As to quaternary structure, interacts with THRB (via ligand-binding domain). Interacts with RELA and REL. Interacts with COMMD1. Interacts with inhibitor kappa B-interacting Ras-like NKIRAS1 and NKIRAS2. In terms of processing, phosphorylated by RPS6KA1; followed by degradation. Interaction with NKIRAS1 and NKIRAS2 probably prevents phosphorylation. As to expression, expressed in all tissues examined.

The protein localises to the cytoplasm. It is found in the nucleus. Its function is as follows. Inhibits NF-kappa-B by complexing with and trapping it in the cytoplasm. However, the unphosphorylated form resynthesized after cell stimulation is able to bind NF-kappa-B allowing its transport to the nucleus and protecting it to further NFKBIA-dependent inactivation. Association with inhibitor kappa B-interacting NKIRAS1 and NKIRAS2 prevent its phosphorylation rendering it more resistant to degradation, explaining its slower degradation. The sequence is that of NF-kappa-B inhibitor beta (NFKBIB) from Homo sapiens (Human).